Here is a 215-residue protein sequence, read N- to C-terminus: Elongation factor Ts (215 aa).

Residues 80 to 83 (TDFA) form an involved in Mg(2+) ion dislocation from EF-Tu region.

Belongs to the EF-Ts family.

The protein resides in the cytoplasm. Associates with the EF-Tu.GDP complex and induces the exchange of GDP to GTP. It remains bound to the aminoacyl-tRNA.EF-Tu.GTP complex up to the GTP hydrolysis stage on the ribosome. This Acetivibrio thermocellus (strain ATCC 27405 / DSM 1237 / JCM 9322 / NBRC 103400 / NCIMB 10682 / NRRL B-4536 / VPI 7372) (Clostridium thermocellum) protein is Elongation factor Ts.